A 128-amino-acid chain; its full sequence is Flagellar hook-basal body complex protein FliE (128 aa).

A disordered region spans residues 1-60; sequence MRPVASFRPPPTFSALQGGASSQATKTAGIDQRGTNQAFSLLDPQSTQSNSTDSSFGEMG. Residues 33–55 are compositionally biased toward polar residues; the sequence is RGTNQAFSLLDPQSTQSNSTDSS.

The protein belongs to the FliE family.

Its subcellular location is the bacterial flagellum basal body. This chain is Flagellar hook-basal body complex protein FliE, found in Rhodopirellula baltica (strain DSM 10527 / NCIMB 13988 / SH1).